We begin with the raw amino-acid sequence, 192 residues long: Aminodeoxychorismate synthase component 2 (192 aa).

A Glutamine amidotransferase type-1 domain is found at 3–192 (SVLMIDNCDS…LANLIHRPCH (190 aa)). Active-site residues include C83, H170, and E172.

In terms of assembly, monomer. Heterodimer consisting of two non-identical subunits: a glutamine amidotransferase subunit (PabA) and a aminodeoxychorismate synthase subunit (PabB).

It carries out the reaction chorismate + L-glutamine = 4-amino-4-deoxychorismate + L-glutamate. The protein operates within cofactor biosynthesis; tetrahydrofolate biosynthesis; 4-aminobenzoate from chorismate: step 1/2. In terms of biological role, part of a heterodimeric complex that catalyzes the two-step biosynthesis of 4-amino-4-deoxychorismate (ADC), a precursor of p-aminobenzoate (PABA) and tetrahydrofolate. In the first step, a glutamine amidotransferase (PabA) generates ammonia as a substrate that, along with chorismate, is used in the second step, catalyzed by aminodeoxychorismate synthase (PabB) to produce ADC. PabA converts glutamine into glutamate only in the presence of stoichiometric amounts of PabB. This Streptomyces lividans protein is Aminodeoxychorismate synthase component 2.